The primary structure comprises 217 residues: Thiopurine S-methyltransferase (217 aa).

Trp10, Leu45, Glu66, and Arg123 together coordinate S-adenosyl-L-methionine.

This sequence belongs to the class I-like SAM-binding methyltransferase superfamily. TPMT family.

It is found in the cytoplasm. The enzyme catalyses S-adenosyl-L-methionine + a thiopurine = S-adenosyl-L-homocysteine + a thiopurine S-methylether.. This chain is Thiopurine S-methyltransferase, found in Pseudomonas fluorescens (strain Pf0-1).